A 361-amino-acid chain; its full sequence is MLYNLLLPHIHNSHIANLFHYITFRSGLAIIITLSLSFIMGPILIKFLRSLQKNGQPIRSDGPESHQTKAGTPTMGGIMIILSSGLSTLLLADLTNQYIWITLFGFISFGIIGFMDDYAKVTKNNHYGVRGKSKLVLQGIISLIICVLLEYLDKNPSHLLNVPFFKNLNLDLGYFYIVFAIFVIVGSSNAVNLTDGLDGLATVPIAFTAGSFALISYLVGNLIYSHYLQLTYIPNTGELTVLCAGLVGSCLGFLWFNAQPAEVFMGDTGSLSLGGVLGIISVITKHEIVLAIVGGLFVIETASVILQVYYFKATQGKRIFKMAPLHHHFEKHGWAESKVVIRFWIISVIFALIGLSSLKLR.

10 helical membrane-spanning segments follow: residues 28–48 (LAIIITLSLSFIMGPILIKFL), 74–94 (TMGGIMIILSSGLSTLLLADL), 99–119 (IWITLFGFISFGIIGFMDDYA), 133–153 (SKLVLQGIISLIICVLLEYLD), 168–188 (LNLDLGYFYIVFAIFVIVGSS), 203–223 (VPIAFTAGSFALISYLVGNLI), 236–256 (TGELTVLCAGLVGSCLGFLWF), 263–283 (VFMGDTGSLSLGGVLGIISVI), 288–308 (IVLAIVGGLFVIETASVILQV), and 338–358 (KVVIRFWIISVIFALIGLSSL).

Belongs to the glycosyltransferase 4 family. MraY subfamily. Mg(2+) serves as cofactor.

It localises to the cell inner membrane. It catalyses the reaction UDP-N-acetyl-alpha-D-muramoyl-L-alanyl-gamma-D-glutamyl-meso-2,6-diaminopimeloyl-D-alanyl-D-alanine + di-trans,octa-cis-undecaprenyl phosphate = di-trans,octa-cis-undecaprenyl diphospho-N-acetyl-alpha-D-muramoyl-L-alanyl-D-glutamyl-meso-2,6-diaminopimeloyl-D-alanyl-D-alanine + UMP. The protein operates within cell wall biogenesis; peptidoglycan biosynthesis. Its function is as follows. Catalyzes the initial step of the lipid cycle reactions in the biosynthesis of the cell wall peptidoglycan: transfers peptidoglycan precursor phospho-MurNAc-pentapeptide from UDP-MurNAc-pentapeptide onto the lipid carrier undecaprenyl phosphate, yielding undecaprenyl-pyrophosphoryl-MurNAc-pentapeptide, known as lipid I. In Rickettsia akari (strain Hartford), this protein is Phospho-N-acetylmuramoyl-pentapeptide-transferase.